A 294-amino-acid polypeptide reads, in one-letter code: Elongation factor Ts (294 aa).

The interval Thr-79–Val-82 is involved in Mg(2+) ion dislocation from EF-Tu.

The protein belongs to the EF-Ts family.

The protein resides in the cytoplasm. Associates with the EF-Tu.GDP complex and induces the exchange of GDP to GTP. It remains bound to the aminoacyl-tRNA.EF-Tu.GTP complex up to the GTP hydrolysis stage on the ribosome. The chain is Elongation factor Ts (tsf) from Geobacillus kaustophilus (strain HTA426).